A 381-amino-acid polypeptide reads, in one-letter code: Phthiodiolone/phenolphthiodiolone dimycocerosates ketoreductase (381 aa).

The protein belongs to the mer family. Phthiodiolone/phenolphthiodiolone dimycocerosates ketoreductase subfamily.

Functionally, catalyzes the reduction of the keto moiety of phthiodiolone dimycocerosates (DIM B) and glycosylated phenolphthiodiolone dimycocerosates to form the intermediate compounds phthiotriol and glycosylated phenolphthiotriol dimycocerosates during phthiocerol dimycocerosates (DIM A) and glycosylated phenolphthiocerol dimycocerosates (PGL) biosynthesis. The sequence is that of Phthiodiolone/phenolphthiodiolone dimycocerosates ketoreductase from Mycobacterium tuberculosis (strain CDC 1551 / Oshkosh).